Consider the following 387-residue polypeptide: MSNYLFTSESVSEGHPDKVADQISDAILDAILQQDPHARVACETMCSTGLIVLSGEITTHATIDYNVIPRDTVREIGYTSSEIGFDASTCAVLTAFNKQSPDIALGVNRSKEEEMDQGAGDQGLMFGYACDETPQLMPLPIYYAHRLVEQQAKLRKSGQLSWLRPDAKSQVSVRYIDGKPKNIETVVISTQHDPDISNGDLFEGVVEEIIKPVLPAEMLSSDIRYLVNPTGRFVVGGPMGDCGLTGRKIIVDTYGGTAHHGGGAFSGKDPSKVDRSAAYAARYVAKNIVAAGLARKCEVQVAYAIGVAKPVSLMLETFGTGKVSDEKLAELITRNFDLRPRAIIHELNLLRPIYSKTAAYGHFGREEPSFTWEKTDIAEQLIADAGI.

ATP is bound at residue H15. D17 contributes to the Mg(2+) binding site. K(+) is bound at residue E43. Residues E56 and Q99 each contribute to the L-methionine site. The segment at 99–109 (QSPDIALGVNR) is flexible loop. Residues 166–168 (DAK), 232–233 (RF), D241, 247–248 (RK), A264, and K268 contribute to the ATP site. L-methionine is bound at residue D241. K272 is an L-methionine binding site.

This sequence belongs to the AdoMet synthase family. In terms of assembly, homotetramer; dimer of dimers. Mg(2+) is required as a cofactor. K(+) serves as cofactor.

The protein resides in the cytoplasm. The enzyme catalyses L-methionine + ATP + H2O = S-adenosyl-L-methionine + phosphate + diphosphate. It participates in amino-acid biosynthesis; S-adenosyl-L-methionine biosynthesis; S-adenosyl-L-methionine from L-methionine: step 1/1. In terms of biological role, catalyzes the formation of S-adenosylmethionine (AdoMet) from methionine and ATP. The overall synthetic reaction is composed of two sequential steps, AdoMet formation and the subsequent tripolyphosphate hydrolysis which occurs prior to release of AdoMet from the enzyme. In Nitrosomonas eutropha (strain DSM 101675 / C91 / Nm57), this protein is S-adenosylmethionine synthase.